A 457-amino-acid polypeptide reads, in one-letter code: Peptidyl-prolyl cis-trans isomerase FKBP5 (457 aa).

Position 1 is an N-acetylmethionine (Met-1). The tract at residues 1–26 (MTTDEGAKNSRGNPAATVAEQGEDVT) is disordered. Position 28 is an N6-acetyllysine (Lys-28). 2 consecutive PPIase FKBP-type domains span residues 50 to 138 (GDRV…LDFK) and 165 to 251 (GARV…KSFE). TPR repeat units lie at residues 268–301 (AAIVKEKGTVYFKGGKYVQAVIQYGKIVSWLEME), 317–350 (LAAFLNLAMCYLKLREYTKAVECCDKALGLDSAN), and 351–384 (EKGLYRRGEAQLLMNEFESAKGDFEKVLEVNPQN). The disordered stretch occupies residues 421-457 (AKEEANKAMSKKTSEGVTNEKLTASHAVEEEKPEGHV). The residue at position 445 (Ser-445) is a Phosphoserine. Over residues 447–457 (AVEEEKPEGHV) the composition is skewed to basic and acidic residues.

As to quaternary structure, part of a heteromultimeric cytoplasmic complex with HSP90AA1, HSPA1A/HSPA1B and steroid receptors. Upon ligand binding dissociates from the complex and FKBP4 takes its place. Interacts with functionally mature heterooligomeric progesterone receptor complexes along with HSP90 and TEBP. Interacts with NR3C1. Interacts with Akt/AKT1 and PHLPP1; enhancing dephosphorylation and subsequent activation of Akt/AKT1. Interacts with IFI44L; this interaction modulates the kinase activity of IKBKB and IKBKE. Interacts with IKBKB and IKBKE. Acetylation impairs ability to promote interaction between Akt/AKT1 and PHLPP1. Deacetylation by SIRT7 promotes interaction between Akt/AKT1 and PHLPP1, leading to suppress Akt/AKT1 activation. Post-translationally, ubiquitinated, leading to degradation in a proteasome-dependent manner. Deubiquitinated by USP49, leading to stabilization.

It is found in the cytoplasm. The protein resides in the nucleus. The catalysed reaction is [protein]-peptidylproline (omega=180) = [protein]-peptidylproline (omega=0). With respect to regulation, inhibited by both FK506 and rapamycin. Immunophilin protein with PPIase and co-chaperone activities. Component of unligated steroid receptors heterocomplexes through interaction with heat-shock protein 90 (HSP90). Plays a role in the intracellular trafficking of heterooligomeric forms of steroid hormone receptors maintaining the complex into the cytoplasm when unliganded. Acts as a regulator of Akt/AKT1 activity by promoting the interaction between Akt/AKT1 and PHLPP1, thereby enhancing dephosphorylation and subsequent activation of Akt/AKT1. Interacts with IKBKE and IKBKB which facilitates IKK complex assembly leading to increased IKBKE and IKBKB kinase activity, NF-kappaB activation, and IFN production. This Saimiri boliviensis boliviensis (Bolivian squirrel monkey) protein is Peptidyl-prolyl cis-trans isomerase FKBP5 (FKBP5).